The sequence spans 446 residues: Signal recognition particle 54 kDa protein (446 aa).

Residues 104–111 (GLQGSGKT), 184–188 (DTAGR), and 242–245 (TKMD) each bind GTP.

Belongs to the GTP-binding SRP family. SRP54 subfamily. As to quaternary structure, part of the signal recognition particle protein translocation system, which is composed of SRP and FtsY. Archaeal SRP consists of a 7S RNA molecule of 300 nucleotides and two protein subunits: SRP54 and SRP19.

It localises to the cytoplasm. It carries out the reaction GTP + H2O = GDP + phosphate + H(+). Involved in targeting and insertion of nascent membrane proteins into the cytoplasmic membrane. Binds to the hydrophobic signal sequence of the ribosome-nascent chain (RNC) as it emerges from the ribosomes. The SRP-RNC complex is then targeted to the cytoplasmic membrane where it interacts with the SRP receptor FtsY. The sequence is that of Signal recognition particle 54 kDa protein from Methanocorpusculum labreanum (strain ATCC 43576 / DSM 4855 / Z).